The sequence spans 618 residues: Glucose starvation modulator protein 1 (618 aa).

The zn(2)-C6 fungal-type DNA-binding region spans 20-48; it reads CEFCHTKHIQCDVGRPCQNCLKRNIGKFC. The disordered stretch occupies residues 325–352; it reads ANANTHPSHNAKLESECDSSSHSDADLE. Residues 335–352 show a composition bias toward basic and acidic residues; that stretch reads AKLESECDSSSHSDADLE. Residues 466 to 538 enclose the PAS domain; that stretch reads LLDLENMAKL…QIFNELLAFG (73 aa).

It belongs to the ERT1/acuK family.

The protein localises to the nucleus. Its function is as follows. Transcription factor which regulates nonfermentable carbon utilization. Binds specifically to 5'-CGGN(8)CGG-3' and 5'-CGGN(9)CGG-3' sequences in the promoter region. This chain is Glucose starvation modulator protein 1 (GSM1), found in Saccharomyces cerevisiae (strain RM11-1a) (Baker's yeast).